Consider the following 348-residue polypeptide: Eukaryotic translation initiation factor 3 subunit I (348 aa).

6 WD repeats span residues 8-49, 51-91, 93-135, 147-186, 196-238, and 294-333; these read GHER…GTFE, HMGT…YTYE, PTPV…PKNQ, DGAK…FIDS, EKIH…KVYK, and GHFG…YDFE.

It belongs to the eIF-3 subunit I family. Component of the eukaryotic translation initiation factor 3 (eIF-3) complex.

The protein localises to the cytoplasm. Its function is as follows. Component of the eukaryotic translation initiation factor 3 (eIF-3) complex, which is involved in protein synthesis of a specialized repertoire of mRNAs and, together with other initiation factors, stimulates binding of mRNA and methionyl-tRNAi to the 40S ribosome. The eIF-3 complex specifically targets and initiates translation of a subset of mRNAs involved in cell proliferation. The protein is Eukaryotic translation initiation factor 3 subunit I of Meyerozyma guilliermondii (strain ATCC 6260 / CBS 566 / DSM 6381 / JCM 1539 / NBRC 10279 / NRRL Y-324) (Yeast).